The sequence spans 196 residues: Spore maturation protein A (196 aa).

A run of 4 helical transmembrane segments spans residues 1–21 (MVNIIWVSLTVIGLVFAMCNG), 37–57 (AITISFGLMSVLVFWLGLMKI), 133–153 (ITFLAVNTSCITLIPTTVIAV), and 163–183 (TDIVGPSILATLISGIGAIII).

It is found in the cell membrane. Its function is as follows. Involved in spore core dehydration; might be involved in the transport of something into or out of the forespore or could be required for some modification of the cortex peptidoglycan structure. The protein is Spore maturation protein A (spmA) of Bacillus subtilis (strain 168).